We begin with the raw amino-acid sequence, 234 residues long: 3,4-dihydroxy-2-butanone 4-phosphate synthase (234 aa).

Residues 39 to 40 (RE), Asp-44, 152 to 156 (RRGHT), and Glu-176 contribute to the D-ribulose 5-phosphate site. Residue Glu-40 participates in Mg(2+) binding. His-155 lines the Mg(2+) pocket.

The protein belongs to the DHBP synthase family. In terms of assembly, homodimer. Mg(2+) is required as a cofactor. It depends on Mn(2+) as a cofactor.

It carries out the reaction D-ribulose 5-phosphate = (2S)-2-hydroxy-3-oxobutyl phosphate + formate + H(+). It functions in the pathway cofactor biosynthesis; riboflavin biosynthesis; 2-hydroxy-3-oxobutyl phosphate from D-ribulose 5-phosphate: step 1/1. Catalyzes the conversion of D-ribulose 5-phosphate to formate and 3,4-dihydroxy-2-butanone 4-phosphate. This chain is 3,4-dihydroxy-2-butanone 4-phosphate synthase, found in Pelobacter propionicus (strain DSM 2379 / NBRC 103807 / OttBd1).